Here is a 430-residue protein sequence, read N- to C-terminus: Serine--tRNA ligase (430 aa).

234 to 236 (TAE) is a binding site for L-serine. ATP is bound at residue 265–267 (RRE). Glu-288 contributes to the L-serine binding site. An ATP-binding site is contributed by 352–355 (EISS). Residue Ser-388 participates in L-serine binding.

Belongs to the class-II aminoacyl-tRNA synthetase family. Type-1 seryl-tRNA synthetase subfamily. As to quaternary structure, homodimer. The tRNA molecule binds across the dimer.

Its subcellular location is the cytoplasm. It catalyses the reaction tRNA(Ser) + L-serine + ATP = L-seryl-tRNA(Ser) + AMP + diphosphate + H(+). The catalysed reaction is tRNA(Sec) + L-serine + ATP = L-seryl-tRNA(Sec) + AMP + diphosphate + H(+). Its pathway is aminoacyl-tRNA biosynthesis; selenocysteinyl-tRNA(Sec) biosynthesis; L-seryl-tRNA(Sec) from L-serine and tRNA(Sec): step 1/1. In terms of biological role, catalyzes the attachment of serine to tRNA(Ser). Is also able to aminoacylate tRNA(Sec) with serine, to form the misacylated tRNA L-seryl-tRNA(Sec), which will be further converted into selenocysteinyl-tRNA(Sec). This Thermosynechococcus vestitus (strain NIES-2133 / IAM M-273 / BP-1) protein is Serine--tRNA ligase.